The sequence spans 143 residues: MSHDSDDKTFPYQKDDAELRRRLTPMQYEVTQHAATERAFTGEYTDTEDAGIYKCVVCSTPLFESGAKFHSGCGWPSYFKPLNGEVIDEKVDYSHGMVRVEVRCNNCGAHLGHVFEDGPRDKTGLRYCINSAALNFESRPENE.

Residues 16-139 (DAELRRRLTP…NSAALNFESR (124 aa)) form the MsrB domain. Zn(2+)-binding residues include Cys55, Cys58, Cys104, and Cys107. Cys128 functions as the Nucleophile in the catalytic mechanism.

This sequence belongs to the MsrB Met sulfoxide reductase family. The cofactor is Zn(2+).

It catalyses the reaction L-methionyl-[protein] + [thioredoxin]-disulfide + H2O = L-methionyl-(R)-S-oxide-[protein] + [thioredoxin]-dithiol. The protein is Peptide methionine sulfoxide reductase MsrB of Burkholderia cenocepacia (strain HI2424).